Here is a 237-residue protein sequence, read N- to C-terminus: Necrosis-inducing protein NPP1 (237 aa).

An N-terminal signal peptide occupies residues 1 to 19; it reads MNVLTFLIAAAVSLAVVQA. The N-linked (GlcNAc...) asparagine glycan is linked to Asn67. Positions 103-113 match the Conserved undecapeptide motif motif; it reads AIMYSWYFPKD. Residues 120–126 carry the Conserved heptapetpide motif motif; it reads GHRHDWE.

Belongs to the Necrosis inducing protein (NPP1) family.

It localises to the secreted. In terms of biological role, secreted effector that acts as a pathogen-associated molecular pattern (PAMP) recognized by the plant immune system. Induces necrotic cell death and ethylene biosynthesis in parsley. Stimulates early induced host cellular responses implicated in elicitor signal transmission such as increased levels of cytoplasmic calcium, production of reactive oxygen species (ROS), and MAP kinase activation. Infiltration of NPP1 into leaves of Arabidopsis thaliana results in transcript accumulation of pathogenesis-related (PR) genes, production of ROS and ethylene, callose apposition, and hypersensitive response (HR)-like cell death. NPP1-mediated induction of the PR1 gene is salicylic acid-dependent, and requires both functional NDR1 and PAD4. The sequence is that of Necrosis-inducing protein NPP1 from Phytophthora nicotianae (Potato buckeye rot agent).